A 443-amino-acid chain; its full sequence is tRNA-2-methylthio-N(6)-dimethylallyladenosine synthase (443 aa).

Residues 3–120 (SKLYIRTFGC…LPDLIDARRR (118 aa)) form the MTTase N-terminal domain. 6 residues coordinate [4Fe-4S] cluster: cysteine 12, cysteine 49, cysteine 83, cysteine 157, cysteine 161, and cysteine 164. The region spanning 143–375 (RTEGSTAFVS…QEKIQLNAQA (233 aa)) is the Radical SAM core domain. Positions 378-441 (QGMVDTVQRI…SHTLRGEISD (64 aa)) constitute a TRAM domain.

This sequence belongs to the methylthiotransferase family. MiaB subfamily. Monomer. [4Fe-4S] cluster serves as cofactor.

The protein resides in the cytoplasm. The catalysed reaction is N(6)-dimethylallyladenosine(37) in tRNA + (sulfur carrier)-SH + AH2 + 2 S-adenosyl-L-methionine = 2-methylsulfanyl-N(6)-dimethylallyladenosine(37) in tRNA + (sulfur carrier)-H + 5'-deoxyadenosine + L-methionine + A + S-adenosyl-L-homocysteine + 2 H(+). In terms of biological role, catalyzes the methylthiolation of N6-(dimethylallyl)adenosine (i(6)A), leading to the formation of 2-methylthio-N6-(dimethylallyl)adenosine (ms(2)i(6)A) at position 37 in tRNAs that read codons beginning with uridine. This chain is tRNA-2-methylthio-N(6)-dimethylallyladenosine synthase, found in Nitrosomonas europaea (strain ATCC 19718 / CIP 103999 / KCTC 2705 / NBRC 14298).